The primary structure comprises 766 residues: MALAHNLGFPRIGADRELKKALEAYWKGDLDQTGLRAVGQQLRAAHWQVQKEAGIELLPVGDFAWYDQVLTHSLTLGVIPERFSPAQDAAGLPTLDTLFAMARGASNCCGASHGKTQHAQELTKWFDTNYHYLVPEFTQDQRFQLSWEQLFEEVDEAHALGHKVKPVLIGPLTYLWLGKAKGDSFDRLELLDRLLPVYGEILGRLAAQGVEWVQFDEPVLTLDLPQDWKTAFERAYHSLQYSPLKKLVATYFGGLEDNLGLAATLPVDGLHIDLVRAPEQLPAVLDRLPSYKVLSLGVVNGRNVWRCDLDNALAALQQAHARFGDNLWVAGSCSLLHSPVDLNREDRLDPELKGWLAFAVQKSREIAILSHALNDPEATEVVEALAQSCEIQASRAQSSRVHNPQVQARLASVTAADHQRRSAFAERITVQRERLKLPAFPTTTIGSFPQTSAIRLARQAHKQGKLSLNDYTDAMRHEIRHAVQVQENLGLDVLVHGEAERNDMVEYFAEQLDGYLFTRFGWVQSYGSRCVKPAIIFGDLSRPQPMTVDWIRYAQSLTDKTMKGMLTGPVTMLMWSFSREDVSRQVQAQQLALAIRDEVLDLERAGIKIVQIDEAAFREGLPLRKAQWQQYLDWAVAAFRLCASGVRDETQIHTHMCYSEFNDVIKSIAAMDADVITIETSRSDMELLDAFEAFDYPNDIGPGVYDIHSPRVPETAEMVSLIAKAARRIPAERLWVNPDCGLKTRGWPETEAALINMVAAARQLRL.

5-methyltetrahydropteroyltri-L-glutamate is bound by residues 16–19 (RELK) and Lys124. Residues 445 to 447 (IGS) and Glu498 contribute to the L-homocysteine site. Residues 445–447 (IGS) and Glu498 contribute to the L-methionine site. 5-methyltetrahydropteroyltri-L-glutamate-binding positions include 529 to 530 (RC) and Trp575. Residue Asp613 participates in L-homocysteine binding. Asp613 is a binding site for L-methionine. Residue Glu619 coordinates 5-methyltetrahydropteroyltri-L-glutamate. Zn(2+) contacts are provided by His655, Cys657, and Glu679. His708 acts as the Proton donor in catalysis. Cys740 serves as a coordination point for Zn(2+).

Belongs to the vitamin-B12 independent methionine synthase family. It depends on Zn(2+) as a cofactor.

The catalysed reaction is 5-methyltetrahydropteroyltri-L-glutamate + L-homocysteine = tetrahydropteroyltri-L-glutamate + L-methionine. The protein operates within amino-acid biosynthesis; L-methionine biosynthesis via de novo pathway; L-methionine from L-homocysteine (MetE route): step 1/1. In terms of biological role, catalyzes the transfer of a methyl group from 5-methyltetrahydrofolate to homocysteine resulting in methionine formation. The chain is 5-methyltetrahydropteroyltriglutamate--homocysteine methyltransferase from Pseudomonas syringae pv. tomato (strain ATCC BAA-871 / DC3000).